The sequence spans 200 residues: NADH-quinone oxidoreductase subunit I 1 (200 aa).

4Fe-4S ferredoxin-type domains lie at 52-82 and 98-127; these read LNRH…VEGA and RVYQ…MTNE. [4Fe-4S] cluster contacts are provided by C62, C65, C68, C72, C107, C110, C113, and C117. The disordered stretch occupies residues 181–200; it reads TERQVAVSKGEKPQDEGVEA. The segment covering 189-200 has biased composition (basic and acidic residues); sequence KGEKPQDEGVEA.

This sequence belongs to the complex I 23 kDa subunit family. As to quaternary structure, NDH-1 is composed of 14 different subunits. Subunits NuoA, H, J, K, L, M, N constitute the membrane sector of the complex. [4Fe-4S] cluster is required as a cofactor.

The protein resides in the cell membrane. It carries out the reaction a quinone + NADH + 5 H(+)(in) = a quinol + NAD(+) + 4 H(+)(out). NDH-1 shuttles electrons from NADH, via FMN and iron-sulfur (Fe-S) centers, to quinones in the respiratory chain. The immediate electron acceptor for the enzyme in this species is believed to be ubiquinone. Couples the redox reaction to proton translocation (for every two electrons transferred, four hydrogen ions are translocated across the cytoplasmic membrane), and thus conserves the redox energy in a proton gradient. In Streptomyces avermitilis (strain ATCC 31267 / DSM 46492 / JCM 5070 / NBRC 14893 / NCIMB 12804 / NRRL 8165 / MA-4680), this protein is NADH-quinone oxidoreductase subunit I 1.